Reading from the N-terminus, the 566-residue chain is Glucose-6-phosphate isomerase, cytosolic (566 aa).

E360 functions as the Proton donor in the catalytic mechanism. Catalysis depends on residues H391 and K516.

Belongs to the GPI family. In terms of assembly, homodimer.

It localises to the cytoplasm. It catalyses the reaction alpha-D-glucose 6-phosphate = beta-D-fructose 6-phosphate. The protein operates within carbohydrate degradation; glycolysis; D-glyceraldehyde 3-phosphate and glycerone phosphate from D-glucose: step 2/4. This chain is Glucose-6-phosphate isomerase, cytosolic (PGIC), found in Spinacia oleracea (Spinach).